Reading from the N-terminus, the 548-residue chain is Membrane protein insertase YidC (548 aa).

Residues 6–26 form a helical membrane-spanning segment; the sequence is NLLVIALLFVSFMIWQAWEQD. The segment at 28 to 56 is disordered; sequence NPQPQTQQTTQTTTTAAGSAADQGVPASG. Residues 29–42 are compositionally biased toward low complexity; that stretch reads PQPQTQQTTQTTTT. 4 helical membrane-spanning segments follow: residues 350-370, 424-444, 458-478, and 499-519; these read FVGN…GIMY, FPLI…MGSI, LSAQ…MFFI, and PVIF…YYIV.

Belongs to the OXA1/ALB3/YidC family. Type 1 subfamily. As to quaternary structure, interacts with the Sec translocase complex via SecD. Specifically interacts with transmembrane segments of nascent integral membrane proteins during membrane integration.

The protein resides in the cell inner membrane. Required for the insertion and/or proper folding and/or complex formation of integral membrane proteins into the membrane. Involved in integration of membrane proteins that insert both dependently and independently of the Sec translocase complex, as well as at least some lipoproteins. Aids folding of multispanning membrane proteins. This chain is Membrane protein insertase YidC, found in Salmonella enteritidis PT4 (strain P125109).